A 282-amino-acid polypeptide reads, in one-letter code: uncharacterized protein (282 aa).

5 helical membrane-spanning segments follow: residues 9-29 (LLKI…APHG), 43-63 (ISGR…FLYA), 123-143 (VFVS…LYLV), 158-178 (YIGM…DNIL), and 232-252 (LAAG…ILLM).

This sequence belongs to the steroid 5-alpha reductase family.

It localises to the endoplasmic reticulum membrane. This is an uncharacterized protein from Schizosaccharomyces pombe (strain 972 / ATCC 24843) (Fission yeast).